A 109-amino-acid chain; its full sequence is Encapsulin nanocompartment cargo protein EncD (109 aa).

Glu47 is a binding site for Fe cation. Residues 61–94 (AGGRGAAAPTPAREAPAEAPRLARGSADELHEAA) form a disordered region. A compositionally biased stretch (low complexity) spans 66 to 85 (AAAPTPAREAPAEAPRLARG). Residues 100 to 106 (LTVGSLR) are probable targeting peptide.

It localises to the encapsulin nanocompartment. Its function is as follows. Cargo protein of a type 1 encapsulin nanocompartment. May help nucleate Fe atoms in the interior of the encapsulin nanocompartment. Present in about 47 copies/encapsulin nanocompartment. This is Encapsulin nanocompartment cargo protein EncD from Myxococcus xanthus (strain DK1622).